A 314-amino-acid polypeptide reads, in one-letter code: Small ribosomal subunit protein uS11m (314 aa).

The N-terminal 37 residues, 1 to 37, are a transit peptide targeting the mitochondrion; sequence MNGVSRHLRASSLLSLIRSYGGINSVCRFSSQSDGFS. Positions 34–138 are disordered; it reads DGFSGGRFRE…GSGFSAPSLS (105 aa). The segment covering 50–63 has biased composition (polar residues); that stretch reads ESANNSGLSNTGRI. Residues 103–114 are compositionally biased toward low complexity; that stretch reads SSLRSRLPNSLP.

The protein belongs to the universal ribosomal protein uS11 family. Component of the mitochondrial ribosome small subunit (28S) which comprises a 12S rRNA and about 30 distinct proteins.

It is found in the mitochondrion. Required for karyogamy during female gametophyte development, when the two polar nuclei fuse to form the diploid central cell nucleus. The chain is Small ribosomal subunit protein uS11m from Arabidopsis thaliana (Mouse-ear cress).